The sequence spans 283 residues: F-box only protein 27 (283 aa).

The tract at residues 1–23 (MGASVSRGRAARVPAPEPEPEEA) is disordered. The region spanning 23–70 (ALDLSQLPPELLLVVLSHVPPRTLLGRCRQVCRGWRALVDGQALWLLI) is the F-box domain. Residues 104-280 (FCARRPIGRN…VTNSSVIVRV (177 aa)) form the FBA domain.

As to quaternary structure, part of a SCF (SKP1-cullin-F-box) protein ligase complex. Interacts with SKP1 and CUL1. As to expression, predominantly expressed in brain, heart and kidney. Expressed at lower levels in liver and lung.

Functionally, substrate-recognition component of the SCF (SKP1-CUL1-F-box protein)-type E3 ubiquitin ligase complex. Able to recognize and bind denatured glycoproteins, which are modified with complex-type oligosaccharides. The chain is F-box only protein 27 (FBXO27) from Homo sapiens (Human).